Reading from the N-terminus, the 678-residue chain is Zinc finger protein 334 (678 aa).

The 72-residue stretch at 8 to 79 (VSFQDLTVNF…EEFSNQNYPE (72 aa)) folds into the KRAB domain. 14 consecutive C2H2-type zinc fingers follow at residues 235 to 257 (NEPC…QRIH), 263 to 285 (YVCN…QRIH), 291 to 313 (YECS…QKIH), 319 to 341 (YECN…FRSH), 347 to 369 (YECK…QRTH), 375 to 397 (NECK…QRIH), 403 to 425 (YECS…RRSH), 431 to 453 (YECS…QITH), 459 to 481 (YECN…QRTH), 542 to 564 (YECN…QRTH), 570 to 592 (YECN…QRTH), 598 to 620 (YERN…RRIH), 626 to 648 (YECN…QKIH), and 654 to 676 (YECN…QKSH).

It belongs to the krueppel C2H2-type zinc-finger protein family.

The protein localises to the nucleus. Its function is as follows. May be involved in transcriptional regulation. The sequence is that of Zinc finger protein 334 (ZNF334) from Pongo abelii (Sumatran orangutan).